The chain runs to 111 residues: Large ribosomal subunit protein uL23 (111 aa).

Belongs to the universal ribosomal protein uL23 family. In terms of assembly, part of the 50S ribosomal subunit. Contacts protein L29, and trigger factor when it is bound to the ribosome.

In terms of biological role, one of the early assembly proteins it binds 23S rRNA. One of the proteins that surrounds the polypeptide exit tunnel on the outside of the ribosome. Forms the main docking site for trigger factor binding to the ribosome. The chain is Large ribosomal subunit protein uL23 from Nitrosospira multiformis (strain ATCC 25196 / NCIMB 11849 / C 71).